A 235-amino-acid polypeptide reads, in one-letter code: Putative HAD-hydrolase YfnB (235 aa).

Catalysis depends on Asp10, which acts as the Nucleophile.

Belongs to the HAD-like hydrolase superfamily. YjjG family.

In Bacillus subtilis (strain 168), this protein is Putative HAD-hydrolase YfnB (yfnB).